The sequence spans 506 residues: Kynurenine 3-monooxygenase (506 aa).

It belongs to the aromatic-ring hydroxylase family. KMO subfamily. The cofactor is FAD.

Its subcellular location is the mitochondrion outer membrane. The enzyme catalyses L-kynurenine + NADPH + O2 + H(+) = 3-hydroxy-L-kynurenine + NADP(+) + H2O. It functions in the pathway cofactor biosynthesis; NAD(+) biosynthesis; quinolinate from L-kynurenine: step 1/3. Its function is as follows. Catalyzes the hydroxylation of L-kynurenine (L-Kyn) to form 3-hydroxy-L-kynurenine (L-3OHKyn). Required for synthesis of quinolinic acid. This is Kynurenine 3-monooxygenase (bna4) from Emericella nidulans (strain FGSC A4 / ATCC 38163 / CBS 112.46 / NRRL 194 / M139) (Aspergillus nidulans).